A 421-amino-acid polypeptide reads, in one-letter code: ATP-dependent RNA helicase RhlB (421 aa).

The short motif at 9 to 37 is the Q motif element; that stretch reads QKFSDFALHPKVVEALEKKGFHNCTPIQA. In terms of domain architecture, Helicase ATP-binding spans 40 to 219; the sequence is LPLTLAGRDV…FEQMNNAEYI (180 aa). 53-60 provides a ligand contact to ATP; it reads AQTGTGKT. The DEAD box signature appears at 165 to 168; the sequence is DEAD. A Helicase C-terminal domain is found at 245-390; the sequence is RLLQTLIEEE…VSKYNPDALM (146 aa). Residues 392–421 are disordered; it reads DLPKPLRLTRPRTGNGPRRTGTPRNRRRSG. The segment covering 402-414 has biased composition (low complexity); the sequence is PRTGNGPRRTGTP.

Belongs to the DEAD box helicase family. RhlB subfamily. Component of the RNA degradosome, which is a multiprotein complex involved in RNA processing and mRNA degradation.

Its subcellular location is the cytoplasm. It catalyses the reaction ATP + H2O = ADP + phosphate + H(+). Functionally, DEAD-box RNA helicase involved in RNA degradation. Has RNA-dependent ATPase activity and unwinds double-stranded RNA. This is ATP-dependent RNA helicase RhlB from Escherichia coli O7:K1 (strain IAI39 / ExPEC).